A 230-amino-acid chain; its full sequence is Phosphoribosylaminoimidazole-succinocarboxamide synthase (230 aa).

It belongs to the SAICAR synthetase family.

It carries out the reaction 5-amino-1-(5-phospho-D-ribosyl)imidazole-4-carboxylate + L-aspartate + ATP = (2S)-2-[5-amino-1-(5-phospho-beta-D-ribosyl)imidazole-4-carboxamido]succinate + ADP + phosphate + 2 H(+). The protein operates within purine metabolism; IMP biosynthesis via de novo pathway; 5-amino-1-(5-phospho-D-ribosyl)imidazole-4-carboxamide from 5-amino-1-(5-phospho-D-ribosyl)imidazole-4-carboxylate: step 1/2. In Thermotoga sp. (strain RQ2), this protein is Phosphoribosylaminoimidazole-succinocarboxamide synthase.